Consider the following 233-residue polypeptide: Flagellar calcium-binding protein TB-17 (233 aa).

Over residues 1 to 11 the composition is skewed to polar residues; it reads MGCSGSKNASN. The tract at residues 1–29 is disordered; it reads MGCSGSKNASNPKDGAASKGGKDGKTTAD. The span at 20-29 shows a compositional bias: basic and acidic residues; sequence GGKDGKTTAD. EF-hand domains lie at 48 to 83, 130 to 165, and 167 to 202; these read ESKSRRIELFKQFDTNGTGKLGFREVLDGCYSILKL, YDIFELTVIFDTMDKDGSLLLELHEFKEALPKLKEW, and VDITDATTVFNEIDTNGSGVVTFDEFSCWAVTKKLQ. Ca(2+)-binding residues include Asp61, Asn63, Thr65, Lys67, Glu72, Asp143, Asp145, Ser147, Glu154, Asp180, Asn182, Ser184, and Glu191. The tract at residues 203-233 is disordered; the sequence is VSGDPDDEENGANEGDGANAGDGVPAAEGSA. Residues 214 to 225 are compositionally biased toward low complexity; sequence ANEGDGANAGDG.

This sequence belongs to the calflagin family.

Its subcellular location is the cell projection. It is found in the cilium. The protein localises to the flagellum. In terms of biological role, may contribute to the rapid motility of the trypanosomes, playing a role either in flagellar structure or in calcium metabolism. Could alternate between a GDP-bound inactive form to a calcium/GTP-bound active form. In Trypanosoma brucei brucei, this protein is Flagellar calcium-binding protein TB-17 (FCABP).